A 156-amino-acid chain; its full sequence is uncharacterized protein (156 aa).

A signal peptide spans 1 to 22 (MFGKVSSLLVFASFLIIQGAFA). Ser129 is lipidated: GPI-anchor amidated serine. A propeptide spans 130–156 (GSPVRFSKSSLLIVSLLSIAAFAALVL) (removed in mature form).

It is found in the cell membrane. This is an uncharacterized protein from Schizosaccharomyces pombe (strain 972 / ATCC 24843) (Fission yeast).